The following is a 553-amino-acid chain: Phosphoenolpyruvate carboxykinase (ATP) (553 aa).

Positions 1–22 (MAPPTAVGSSINFEGHPTIKST) are disordered. Residue 255–262 (GLSGTGKT) participates in ATP binding.

The protein belongs to the phosphoenolpyruvate carboxykinase (ATP) family.

It catalyses the reaction oxaloacetate + ATP = phosphoenolpyruvate + ADP + CO2. It functions in the pathway carbohydrate biosynthesis; gluconeogenesis. In Candida albicans (Yeast), this protein is Phosphoenolpyruvate carboxykinase (ATP) (PCK1).